The primary structure comprises 548 residues: Chaperonin GroEL (548 aa).

Residues 30 to 33, Lys-51, 87 to 91, Gly-415, 479 to 481, and Asp-495 contribute to the ATP site; these read TLGP, DGTTT, and NAA. Residues 525 to 548 form a disordered region; it reads PKEDKTSDASSSPAGGMGGMGGMM. The span at 539-548 shows a compositional bias: gly residues; that stretch reads GGMGGMGGMM.

It belongs to the chaperonin (HSP60) family. As to quaternary structure, forms a cylinder of 14 subunits composed of two heptameric rings stacked back-to-back. Interacts with the co-chaperonin GroES.

Its subcellular location is the cytoplasm. The enzyme catalyses ATP + H2O + a folded polypeptide = ADP + phosphate + an unfolded polypeptide.. Together with its co-chaperonin GroES, plays an essential role in assisting protein folding. The GroEL-GroES system forms a nano-cage that allows encapsulation of the non-native substrate proteins and provides a physical environment optimized to promote and accelerate protein folding. The protein is Chaperonin GroEL of Buchnera aphidicola subsp. Rhopalosiphum maidis.